The following is a 356-amino-acid chain: Protein-glutamate methylesterase/protein-glutamine glutaminase 2 (356 aa).

In terms of domain architecture, Response regulatory spans 4 to 121 (KVLIVDDSAV…KGFLEESSHE (118 aa)). D55 is subject to 4-aspartylphosphate. Positions 169 to 356 (FATTERIIAI…LELIAKAICR (188 aa)) constitute a CheB-type methylesterase domain. Residues S181, H207, and D303 contribute to the active site.

This sequence belongs to the CheB family. Phosphorylated by CheA. Phosphorylation of the N-terminal regulatory domain activates the methylesterase activity.

It is found in the cytoplasm. It carries out the reaction [protein]-L-glutamate 5-O-methyl ester + H2O = L-glutamyl-[protein] + methanol + H(+). The enzyme catalyses L-glutaminyl-[protein] + H2O = L-glutamyl-[protein] + NH4(+). Involved in chemotaxis. Part of a chemotaxis signal transduction system that modulates chemotaxis in response to various stimuli. Catalyzes the demethylation of specific methylglutamate residues introduced into the chemoreceptors (methyl-accepting chemotaxis proteins or MCP) by CheR. Also mediates the irreversible deamidation of specific glutamine residues to glutamic acid. This Chromobacterium violaceum (strain ATCC 12472 / DSM 30191 / JCM 1249 / CCUG 213 / NBRC 12614 / NCIMB 9131 / NCTC 9757 / MK) protein is Protein-glutamate methylesterase/protein-glutamine glutaminase 2.